A 308-amino-acid polypeptide reads, in one-letter code: Ribosomal RNA small subunit methyltransferase H (308 aa).

S-adenosyl-L-methionine is bound by residues 36 to 38 (GGH), Asp55, Phe86, Asp103, and Gln110.

This sequence belongs to the methyltransferase superfamily. RsmH family.

It is found in the cytoplasm. It carries out the reaction cytidine(1402) in 16S rRNA + S-adenosyl-L-methionine = N(4)-methylcytidine(1402) in 16S rRNA + S-adenosyl-L-homocysteine + H(+). Specifically methylates the N4 position of cytidine in position 1402 (C1402) of 16S rRNA. This Helicobacter pylori (strain G27) protein is Ribosomal RNA small subunit methyltransferase H.